Reading from the N-terminus, the 358-residue chain is Phospho-N-acetylmuramoyl-pentapeptide-transferase (358 aa).

The next 10 helical transmembrane spans lie at 28-48, 72-92, 96-116, 133-153, 164-184, 196-216, 233-253, 260-280, 285-305, and 335-355; these read WALATALLVSIVVGPRFIAWL, TMGGLLIGFAVTFSVLLWADL, YIWLTLLVFTGFGFIGFLDDY, FLWQVGVAVAAMYLLVQLPAY, GLTPDLGWLYIPFAVAVMVGS, GLAIGPTIVAGIVFSIFIYVA, VGEVAVFCGALVGAGLGFLWF, VFMGDVGSLSLGGTLGFLAVL, LLLLVVGGLFVVETLSVILQV, and KIIIRFWITSALLGLIALSVL.

This sequence belongs to the glycosyltransferase 4 family. MraY subfamily. Requires Mg(2+) as cofactor.

The protein localises to the cell inner membrane. It carries out the reaction UDP-N-acetyl-alpha-D-muramoyl-L-alanyl-gamma-D-glutamyl-meso-2,6-diaminopimeloyl-D-alanyl-D-alanine + di-trans,octa-cis-undecaprenyl phosphate = di-trans,octa-cis-undecaprenyl diphospho-N-acetyl-alpha-D-muramoyl-L-alanyl-D-glutamyl-meso-2,6-diaminopimeloyl-D-alanyl-D-alanine + UMP. Its pathway is cell wall biogenesis; peptidoglycan biosynthesis. Catalyzes the initial step of the lipid cycle reactions in the biosynthesis of the cell wall peptidoglycan: transfers peptidoglycan precursor phospho-MurNAc-pentapeptide from UDP-MurNAc-pentapeptide onto the lipid carrier undecaprenyl phosphate, yielding undecaprenyl-pyrophosphoryl-MurNAc-pentapeptide, known as lipid I. In Nitratidesulfovibrio vulgaris (strain ATCC 29579 / DSM 644 / CCUG 34227 / NCIMB 8303 / VKM B-1760 / Hildenborough) (Desulfovibrio vulgaris), this protein is Phospho-N-acetylmuramoyl-pentapeptide-transferase.